The primary structure comprises 781 residues: Catenin beta-1 (781 aa).

Residue alanine 2 is modified to N-acetylalanine. Positions 2-23 (ATQADLMELDMAMEPDRKAAVS) are interaction with VCL. Serine 23 is modified (phosphoserine; by GSK3-beta; alternate). A glycan (O-linked (GlcNAc) serine; alternate) is linked at serine 23. Residue serine 29 is modified to Phosphoserine; by GSK3-beta. 2 positions are modified to phosphoserine; by GSK3-beta and HIPK2: serine 33 and serine 37. A disordered region spans residues 34 to 57 (GIHSGATTTAPSLSGKGNPEEEDV). Threonine 41 bears the Phosphothreonine; by GSK3-beta mark. Serine 45 bears the Phosphoserine mark. An N6-acetyllysine modification is found at lysine 49. Tyrosine 64 is modified (phosphotyrosine; by PTK6). Tyrosine 142 is subject to Phosphotyrosine; by FYN and PTK6. 12 ARM repeats span residues 151 to 191 (RAIP…IMRS), 193 to 234 (QMVS…IFKS), 235 to 276 (GGIP…VRLA), 277 to 318 (GGLQ…ILAS), 319 to 360 (GGPQ…IVEA), 361 to 389 (GGMQ…RNLS), 400 to 441 (GLLG…VCQV), 442 to 484 (GGIE…AQNA), 489 to 530 (YGLP…LREQ), 531 to 571 (GAIP…EIVE), 594 to 636 (NTIP…AEGA), and 637 to 666 (TAPL…SEDK). The tract at residues 156-178 (LTKLLNDEDQVVVNKAAVMVHQL) is interaction with BCL9. The residue at position 191 (serine 191) is a Phosphoserine. Serine 246 is subject to Phosphoserine; by CDK5. Phosphotyrosine is present on residues tyrosine 331 and tyrosine 333. Position 552 is a phosphoserine; by AMPK (serine 552). Threonine 556 is subject to Phosphothreonine. Cysteine 619 is modified (S-nitrosocysteine). The residue at position 675 (serine 675) is a Phosphoserine. The segment at 720–781 (HSGGYGQDAL…NQLAWFDTDL (62 aa)) is disordered. Residues 734-745 (MMEHEMGGHHPG) show a composition bias toward basic and acidic residues. The interaction with SCRIB stretch occupies residues 772–781 (NQLAWFDTDL).

This sequence belongs to the beta-catenin family. As to quaternary structure, two separate complex-associated pools are found in the cytoplasm. The majority is present as component of an E-cadherin/ catenin adhesion complex composed of at least E-cadherin/CDH1 and beta-catenin/CTNNB1, and possibly alpha-catenin/CTNNA1; the complex is located to adherens junctions. The stable association of CTNNA1 is controversial as CTNNA1 was shown not to bind to F-actin when assembled in the complex. Alternatively, the CTNNA1-containing complex may be linked to F-actin by other proteins such as LIMA1. Binds NHERF1. Interacts with PTPRU (via the cytoplasmic juxtamembrane domain) and with EMD. Interacts with SESTD1 and TRPC4. Interacts with CAV1. Interacts with PTPRJ. Interacts with PKT7. Interacts with FAT1 (via the cytoplasmic domain). Interacts with CDK2, NDRG2 and NANOS1. Interacts with NEK2 and CDK5. Interacts with CARM1, CXADR, PCDH11Y and PTK6. Interacts with RAPGEF2. Interacts with SOX7; this interaction may lead to proteasomal degradation of active CTNNB1 and thus inhibition of Wnt/beta-catenin-stimulated transcription. Identified in a complex with HINT1 and MITF. Interacts with FHIT. Interacts with FERMT2. Identified in a complex with TCF4 and FERMT2. Another cytoplasmic pool is part of a large complex containing AXIN1, AXIN2, APC, CSNK1A1 and GSK3B that promotes phosphorylation on N-terminal Ser and Thr residues and ubiquitination of CTNNB1 via BTRC and its subsequent degradation by the proteasome. Wnt-dependent activation of DVL antagonizes the action of GSK3B. When GSK3B activity is inhibited the complex dissociates, CTNNB1 is dephosphorylated and is no longer targeted for destruction. The stabilized protein translocates to the nucleus, where it binds TCF/LEF-1 family members, BCL9, BCL9L and possibly also RUVBL1 and CHD8. Interacts with TAX1BP3 (via the PDZ domain); this interaction inhibits the transcriptional activity of CTNNB1. Interacts with AJAP1, BAIAP1 and CTNNA3. Interacts with TRPV4; the TRPV4 and CTNNB1 complex can interact with CDH1. Interacts with VCL. The CTNNB1 and TCF4 complex interacts with PML. Interacts with XIRP1. Binds CTNNBIP and EP300. CTNNB1 forms a ternary complex with LEF1 and EP300 that is disrupted by CTNNBIP1 binding. Interacts directly with AXIN1; the interaction is regulated by CDK2 phosphorylation of AXIN1. Interacts with GLIS2. Interacts with SCRIB. Interacts with TNIK and TCF7L2. Interacts with SLC30A9. Interacts with RORA. May interact with P-cadherin/CDH3. Interacts with RNF220. Interacts with CTNND2. Interacts (via the C-terminal region) with CBY1. The complex composed, at least, of APC, CTNNB1 and GSK3B interacts with JPT1; the interaction requires the inactive form of GSK3B (phosphorylated at 'Ser-9'). Interacts with DLG5. Interacts with FAM53B; promoting translocation to the nucleus. Interacts with TMEM170B. Interacts with AHI1. Interacts with GID8. Component of an cadherin:catenin adhesion complex composed of at least of CDH26, beta-catenin/CTNNB1, alpha-catenin/CTNNA1 and p120 catenin/CTNND1. Forms a complex comprising APPL1, RUVBL2, APPL2, HDAC1 and HDAC2. Interacts with IRF2BPL; mediates the ubiquitination and degradation of CTNNB1. Interacts with AMFR. Interacts with LMBR1L. Interacts with SOX30; prevents interaction of CTNNB1 with TCF7L2/TCF4 and leads to inhibition of Wnt signaling. Interacts with SOX9; inhibiting CTNNB1 activity by competing with the binding sites of TCF/LEF within CTNNB1, thereby inhibiting the Wnt signaling. Interacts with SPN/CD43 cytoplasmic tail. Interacts (when phosphorylated at Tyr-333) with isoform M2 of PKM (PKM2); promoting transcription activation. Interacts with PKP2 (via HEAD domain). Interacts with CDH1. Interacts (when unphosphorylated) with FLYWCH1, perhaps preventing interaction of CTNNB1 with TCF4, and thereby regulating transcription activation; phosphorylation of CTNNB1 may inhibit the interaction. Interacts (via the central armadillo domains) with probable transcriptional regulator ADNP (via N-terminal region); interaction is direct and stabilizes CTNNB1 by modulating its phosphorylation by glycogen synthase kinase-3 beta GSK3B. Interacts with NR5A2. Interacts with DSG2; the interaction promotes localization of CTNNB1 at cell junctions thus reducing its nuclear localization and subsequent transcription of CTNNB1/TCF-target genes. In terms of processing, phosphorylation at Ser-552 by AMPK promotes stabilization of the protein, enhancing TCF/LEF-mediated transcription. Phosphorylation by GSK3B requires prior phosphorylation of Ser-45 by another kinase. Phosphorylation proceeds then from Thr-41 to Ser-37 and Ser-33. Phosphorylated by NEK2. EGF stimulates tyrosine phosphorylation. Phosphorylated on Ser-33 and Ser-37 by HIPK2 and GSK3B, this phosphorylation triggers proteasomal degradation. Phosphorylation on Ser-191 and Ser-246 by CDK5. Phosphorylation by CDK2 regulates insulin internalization. Phosphorylation by PTK6 at Tyr-64, Tyr-142, Tyr-331 and/or Tyr-333 with the predominant site at Tyr-64 is not essential for inhibition of transcriptional activity. Phosphorylation by SRC at Tyr-333 promotes interaction with isoform M2 of PKM (PKM2); promoting transcription activation. Ubiquitinated by the SCF(BTRC) E3 ligase complex when phosphorylated by GSK3B, leading to its degradation. Ubiquitinated by a E3 ubiquitin ligase complex containing UBE2D1, SIAH1, CACYBP/SIP, SKP1, APC and TBL1X, leading to its subsequent proteasomal degradation. Ubiquitinated and degraded following interaction with SOX9. Ubiquitinated via 'Lys-11'- and 'Lys-29'-linked ubiquitin chains by UBR5, leading to its stabilization. Post-translationally, S-nitrosylation at Cys-619 within adherens junctions promotes VEGF-induced, NO-dependent endothelial cell permeability by disrupting interaction with E-cadherin, thus mediating disassembly adherens junctions. In terms of processing, O-glycosylation at Ser-23 decreases nuclear localization and transcriptional activity, and increases localization to the plasma membrane and interaction with E-cadherin CDH1. Deacetylated at Lys-49 by SIRT1. As to expression, expressed in cerebellar granule neurons (at protein level). Expressed in the intestinal epithelium (at protein level). Abundantly expressed in the tooth, skin, lung, kidney, eye and brain with weak expression in the liver and heart.

It localises to the cytoplasm. The protein localises to the nucleus. It is found in the cytoskeleton. The protein resides in the cell junction. Its subcellular location is the adherens junction. It localises to the cell membrane. The protein localises to the microtubule organizing center. It is found in the centrosome. The protein resides in the spindle pole. Its subcellular location is the synapse. It localises to the cilium basal body. Key downstream component of the canonical Wnt signaling pathway. In the absence of Wnt, forms a complex with AXIN1, AXIN2, APC, CSNK1A1 and GSK3B that promotes phosphorylation on N-terminal Ser and Thr residues and ubiquitination of CTNNB1 via BTRC and its subsequent degradation by the proteasome. In the presence of Wnt ligand, CTNNB1 is not ubiquitinated and accumulates in the nucleus, where it acts as a coactivator for transcription factors of the TCF/LEF family, leading to activate Wnt responsive genes. Also acts as a coactivator for other transcription factors, such as NR5A2. Promotes epithelial to mesenchymal transition/mesenchymal to epithelial transition (EMT/MET) via driving transcription of CTNNB1/TCF-target genes. Involved in the regulation of cell adhesion, as component of an E-cadherin:catenin adhesion complex. Acts as a negative regulator of centrosome cohesion. Involved in the CDK2/PTPN6/CTNNB1/CEACAM1 pathway of insulin internalization. Blocks anoikis of malignant kidney and intestinal epithelial cells and promotes their anchorage-independent growth by down-regulating DAPK2. Disrupts PML function and PML-NB formation by inhibiting RANBP2-mediated sumoylation of PML. Promotes neurogenesis by maintaining sympathetic neuroblasts within the cell cycle. Involved in chondrocyte differentiation via interaction with SOX9: SOX9-binding competes with the binding sites of TCF/LEF within CTNNB1, thereby inhibiting the Wnt signaling. Acts as a positive regulator of odontoblast differentiation during mesenchymal tooth germ formation, via promoting the transcription of differentiation factors such as LEF1, BMP2 and BMP4. Activity is repressed in a MSX1-mediated manner at the bell stage of mesenchymal tooth germ formation which prevents premature differentiation of odontoblasts. The chain is Catenin beta-1 from Mus musculus (Mouse).